We begin with the raw amino-acid sequence, 931 residues long: Protein unc-45 homolog B (931 aa).

3 TPR repeats span residues 6-39 (AVQL…TKDK), 43-76 (ATLY…NSSD), and 77-110 (IKAL…EPRN). ARM repeat units follow at residues 169-208 (EAGA…GMCS), 211-250 (QARA…AIID), and 751-790 (DKLR…NMVL).

As to quaternary structure, interacts with HSP90 in an ATP-independent manner. Interacts with UBE4B; the interaction may target UNC45B for proteasomal degradation. As to expression, expressed in eye lens tissues. Expressed in muscle (at protein level).

The protein resides in the cytoplasm. The protein localises to the myofibril. Its subcellular location is the sarcomere. It localises to the z line. It is found in the a band. The protein resides in the perinuclear region. The protein localises to the cytosol. Acts as a co-chaperone for HSP90 and is required for proper folding of the myosin motor domain. Plays a role in sarcomere formation during muscle cell development. Is necessary for normal early lens development. The chain is Protein unc-45 homolog B from Homo sapiens (Human).